The primary structure comprises 322 residues: o-succinylbenzoate synthase (322 aa).

The active-site Proton donor is the K136. 3 residues coordinate Mg(2+): D165, E194, and D219. Catalysis depends on K243, which acts as the Proton acceptor.

The protein belongs to the mandelate racemase/muconate lactonizing enzyme family. MenC type 1 subfamily. In terms of assembly, monomer. It depends on a divalent metal cation as a cofactor.

It carries out the reaction (1R,6R)-6-hydroxy-2-succinyl-cyclohexa-2,4-diene-1-carboxylate = 2-succinylbenzoate + H2O. It participates in quinol/quinone metabolism; 1,4-dihydroxy-2-naphthoate biosynthesis; 1,4-dihydroxy-2-naphthoate from chorismate: step 4/7. Its pathway is cofactor biosynthesis; phylloquinone biosynthesis. In terms of biological role, converts 2-succinyl-6-hydroxy-2,4-cyclohexadiene-1-carboxylate (SHCHC) to 2-succinylbenzoate (OSB). Does not show N-succinylamino acid racemase (NSAR) activity with N-succinyl-L-phenylglycine as substrate. The sequence is that of o-succinylbenzoate synthase from Thermosynechococcus vestitus (strain NIES-2133 / IAM M-273 / BP-1).